Consider the following 609-residue polypeptide: UvrABC system protein C (609 aa).

The region spanning 16–94 (SSAGVYRMYD…IKQYMPKYNV (79 aa)) is the GIY-YIG domain. In terms of domain architecture, UVR spans 203–238 (KQVISELVAKMEEAAEQQAYEQAARFRDQIMALRRV).

This sequence belongs to the UvrC family. In terms of assembly, interacts with UvrB in an incision complex.

Its subcellular location is the cytoplasm. Its function is as follows. The UvrABC repair system catalyzes the recognition and processing of DNA lesions. UvrC both incises the 5' and 3' sides of the lesion. The N-terminal half is responsible for the 3' incision and the C-terminal half is responsible for the 5' incision. The chain is UvrABC system protein C from Shewanella oneidensis (strain ATCC 700550 / JCM 31522 / CIP 106686 / LMG 19005 / NCIMB 14063 / MR-1).